A 285-amino-acid chain; its full sequence is Pantothenate synthetase (285 aa).

Methionine 33 to histidine 40 lines the ATP pocket. Histidine 40 (proton donor) is an active-site residue. (R)-pantoate is bound at residue glutamine 64. Glutamine 64 lines the beta-alanine pocket. Glycine 150–aspartate 153 contacts ATP. Residue glutamine 156 participates in (R)-pantoate binding. ATP is bound by residues alanine 179 and leucine 187 to arginine 190.

The protein belongs to the pantothenate synthetase family. As to quaternary structure, homodimer.

The protein localises to the cytoplasm. The catalysed reaction is (R)-pantoate + beta-alanine + ATP = (R)-pantothenate + AMP + diphosphate + H(+). The protein operates within cofactor biosynthesis; (R)-pantothenate biosynthesis; (R)-pantothenate from (R)-pantoate and beta-alanine: step 1/1. Functionally, catalyzes the condensation of pantoate with beta-alanine in an ATP-dependent reaction via a pantoyl-adenylate intermediate. This chain is Pantothenate synthetase, found in Caulobacter vibrioides (strain ATCC 19089 / CIP 103742 / CB 15) (Caulobacter crescentus).